The chain runs to 278 residues: MTRVIVISNLRLAQAFVDYMATHHVALEIRPDAQGVEIWLADDEQLSAVQHELEQFLLDPLNPRYQAASWQAGNVNSNLPYQRFSYLQTLRSQAGPLTLSVMVLCIAIYILMLITGDMAVMSWLAWPYNSSQYLQIWRWVSHAFLHFSLLHILFNLMWWWYLGGQMEKRLGTSKLLVLTIVSAVFSGWGQSLFSGANFGGLSGVVYALMGYVWLTGERAPERGISLPRGLMAFSVLWLIAGYFDILGLSIANAAHVSGLIIGLLMAFWDTRNSARTVQ.

The next 6 helical transmembrane spans lie at 94 to 114, 143 to 163, 175 to 195, 196 to 216, 224 to 241, and 245 to 267; these read AGPLTLSVMVLCIAIYILMLI, AFLHFSLLHILFNLMWWWYLG, LLVLTIVSAVFSGWGQSLFSG, ANFGGLSGVVYALMGYVWLTG, ISLPRGLMAFSVLWLIAG, and ILGLSIANAAHVSGLIIGLLMAF. Serine 202 serves as the catalytic Nucleophile. The active site involves histidine 255.

The protein belongs to the peptidase S54 family.

It is found in the cell inner membrane. It carries out the reaction Cleaves type-1 transmembrane domains using a catalytic dyad composed of serine and histidine that are contributed by different transmembrane domains.. Its function is as follows. Rhomboid-type serine protease that catalyzes intramembrane proteolysis. The polypeptide is Rhomboid protease GlpG (Yersinia pestis bv. Antiqua (strain Antiqua)).